A 130-amino-acid chain; its full sequence is uncharacterized protein (130 aa).

Residues 8–28 (PFILMIIVLGLFLVSIGGYYY) traverse the membrane as a helical segment.

The protein resides in the membrane. This is an uncharacterized protein from Bacillus anthracis.